A 956-amino-acid chain; its full sequence is Pyruvate, phosphate dikinase, chloroplastic (956 aa).

The N-terminal 79 residues, 1–79 (MMSSLFVEGM…AVLNPVSPPV (79 aa)), are a transit peptide targeting the chloroplast. Residue Thr536 is modified to Phosphothreonine; by PDRP1. The Tele-phosphohistidine intermediate role is filled by His538. Residues Arg644, Arg701, Glu830, Gly851, Thr852, Asn853, and Asp854 each contribute to the substrate site. A Mg(2+)-binding site is contributed by Glu830. Asp854 is a Mg(2+) binding site. The active-site Proton donor is Cys916.

The protein belongs to the PEP-utilizing enzyme family. Homotetramer. Mg(2+) serves as cofactor. In terms of processing, phosphorylation of Thr-536 in the dark inactivates the enzyme. Dephosphorylation upon light stimulation reactivates the enzyme.

It is found in the plastid. The protein resides in the chloroplast. It catalyses the reaction pyruvate + phosphate + ATP = phosphoenolpyruvate + AMP + diphosphate + H(+). Its activity is regulated as follows. Activated by light-induced dephosphorylation. Inhibited by dark-induced phosphorylation. Both reactions are catalyzed by PDRP1. In terms of biological role, formation of phosphoenolpyruvate. In Flaveria pringlei, this protein is Pyruvate, phosphate dikinase, chloroplastic (PPDK).